Here is a 682-residue protein sequence, read N- to C-terminus: Nisin leader peptide-processing serine protease NisP (682 aa).

The signal sequence occupies residues 1 to 22; the sequence is MKKILGFLFIVCSLGLSATVHG. The propeptide occupies 23-195; it reads ETTNSQQLLS…RKAKEVVSLR (173 aa). Residues 231-566 form the Peptidase S8 domain; the sequence is QWDMKYVTNN…VDLLNGKNKA (336 aa). Catalysis depends on charge relay system residues Asp-259, His-306, and Ser-512. The LPXTG sorting signal motif lies at 652-656; that stretch reads LPVTG. At Thr-655 the chain carries Pentaglycyl murein peptidoglycan amidated threonine. Residues 656 to 682 constitute a propeptide, removed by sortase; the sequence is GDGEDFLPALGIVCISILGILKRKTKN.

It belongs to the peptidase S8 family.

The protein resides in the secreted. It localises to the cell wall. It participates in antibiotic biosynthesis; nisin biosynthesis. Cleaves the lantibiotic nisin precursor peptide. The polypeptide is Nisin leader peptide-processing serine protease NisP (nisP) (Lactococcus lactis subsp. lactis (Streptococcus lactis)).